The chain runs to 979 residues: Glycine dehydrogenase (decarboxylating) (979 aa).

An N6-(pyridoxal phosphate)lysine modification is found at Lys-724.

The protein belongs to the GcvP family. As to quaternary structure, the glycine cleavage system is composed of four proteins: P, T, L and H. Requires pyridoxal 5'-phosphate as cofactor.

The enzyme catalyses N(6)-[(R)-lipoyl]-L-lysyl-[glycine-cleavage complex H protein] + glycine + H(+) = N(6)-[(R)-S(8)-aminomethyldihydrolipoyl]-L-lysyl-[glycine-cleavage complex H protein] + CO2. Functionally, the glycine cleavage system catalyzes the degradation of glycine. The P protein binds the alpha-amino group of glycine through its pyridoxal phosphate cofactor; CO(2) is released and the remaining methylamine moiety is then transferred to the lipoamide cofactor of the H protein. This Nostoc punctiforme (strain ATCC 29133 / PCC 73102) protein is Glycine dehydrogenase (decarboxylating).